Consider the following 255-residue polypeptide: Vitamin B12 import ATP-binding protein BtuD (255 aa).

In terms of domain architecture, ABC transporter spans 2–240 (MRVKHIAVGS…AGLAEVFKTQ (239 aa)). ATP is bound at residue 30–37 (GPNGSGKS).

The protein belongs to the ABC transporter superfamily. Vitamin B12 importer (TC 3.A.1.13.1) family. As to quaternary structure, the complex is composed of two ATP-binding proteins (BtuD), two transmembrane proteins (BtuC) and a solute-binding protein (BtuF).

The protein localises to the cell inner membrane. It carries out the reaction an R-cob(III)alamin(out) + ATP + H2O = an R-cob(III)alamin(in) + ADP + phosphate + H(+). Part of the ABC transporter complex BtuCDF involved in vitamin B12 import. Responsible for energy coupling to the transport system. The sequence is that of Vitamin B12 import ATP-binding protein BtuD from Vibrio parahaemolyticus serotype O3:K6 (strain RIMD 2210633).